Here is a 573-residue protein sequence, read N- to C-terminus: 2-isopropylmalate synthase (573 aa).

One can recognise a Pyruvate carboxyltransferase domain in the interval 37–314; that stretch reads PRWLSTDLRD…DPQIDFSDID (278 aa). 4 residues coordinate Mg(2+): Asp-46, His-253, His-255, and Asn-289. The regulatory domain stretch occupies residues 456–573; sequence NPDNPWGRIQ…VVSAVNRATR (118 aa).

The protein belongs to the alpha-IPM synthase/homocitrate synthase family. LeuA type 2 subfamily. As to quaternary structure, homodimer. It depends on Mg(2+) as a cofactor.

It is found in the cytoplasm. It catalyses the reaction 3-methyl-2-oxobutanoate + acetyl-CoA + H2O = (2S)-2-isopropylmalate + CoA + H(+). Its pathway is amino-acid biosynthesis; L-leucine biosynthesis; L-leucine from 3-methyl-2-oxobutanoate: step 1/4. Functionally, catalyzes the condensation of the acetyl group of acetyl-CoA with 3-methyl-2-oxobutanoate (2-ketoisovalerate) to form 3-carboxy-3-hydroxy-4-methylpentanoate (2-isopropylmalate). The chain is 2-isopropylmalate synthase from Streptomyces coelicolor (strain ATCC BAA-471 / A3(2) / M145).